The sequence spans 194 residues: NADH-quinone oxidoreductase subunit B (194 aa).

A disordered region spans residues 1–26 (MGLTPSATKPEIAQAPQGIVDPSTGR). [4Fe-4S] cluster is bound by residues cysteine 73, cysteine 74, cysteine 138, and cysteine 168.

The protein belongs to the complex I 20 kDa subunit family. In terms of assembly, NDH-1 is composed of 14 different subunits. Subunits NuoB, C, D, E, F, and G constitute the peripheral sector of the complex. Requires [4Fe-4S] cluster as cofactor.

The protein localises to the cell inner membrane. It catalyses the reaction a quinone + NADH + 5 H(+)(in) = a quinol + NAD(+) + 4 H(+)(out). In terms of biological role, NDH-1 shuttles electrons from NADH, via FMN and iron-sulfur (Fe-S) centers, to quinones in the respiratory chain. The immediate electron acceptor for the enzyme in this species is believed to be ubiquinone. Couples the redox reaction to proton translocation (for every two electrons transferred, four hydrogen ions are translocated across the cytoplasmic membrane), and thus conserves the redox energy in a proton gradient. In Xanthobacter autotrophicus (strain ATCC BAA-1158 / Py2), this protein is NADH-quinone oxidoreductase subunit B.